The sequence spans 493 residues: Ribulose bisphosphate carboxylase large chain (493 aa).

A substrate-binding site is contributed by Asn132. Cys181 is subject to S-nitrosocysteine. Residue Thr182 participates in substrate binding. Catalysis depends on Lys184, which acts as the Proton acceptor. Position 186 (Lys186) interacts with substrate. 3 residues coordinate Mg(2+): Lys210, Asp212, and Glu213. Lys210 carries the post-translational modification N6-carboxylysine. His302 serves as the catalytic Proton acceptor. Substrate is bound by residues Arg303, His335, and Ser387. Cys460 is subject to S-nitrosocysteine.

The protein belongs to the RuBisCO large chain family. Type I subfamily. As to quaternary structure, heterohexadecamer of 8 large chains and 8 small chains. It depends on Mg(2+) as a cofactor.

It localises to the plastid. Its subcellular location is the chloroplast. The catalysed reaction is 2 (2R)-3-phosphoglycerate + 2 H(+) = D-ribulose 1,5-bisphosphate + CO2 + H2O. The enzyme catalyses D-ribulose 1,5-bisphosphate + O2 = 2-phosphoglycolate + (2R)-3-phosphoglycerate + 2 H(+). Its function is as follows. RuBisCO catalyzes two reactions: the carboxylation of D-ribulose 1,5-bisphosphate, the primary event in carbon dioxide fixation, as well as the oxidative fragmentation of the pentose substrate in the photorespiration process. Both reactions occur simultaneously and in competition at the same active site. Carbon dioxide and oxygen bind in the same pocket of the enzyme in a similar manner. The chain is Ribulose bisphosphate carboxylase large chain from Galdieria sulphuraria (Red alga).